The sequence spans 147 residues: Hemoglobin subunit epsilon (147 aa).

In terms of domain architecture, Globin spans 3–147 (HFTAEEKNAI…VANALAHKYH (145 aa)). S51 is subject to Phosphoserine. The heme b site is built by H64 and H93.

This sequence belongs to the globin family. Heterotetramer of two alpha chains and two epsilon chains in early embryonic hemoglobin Gower-2; two zeta chains and two epsilon chains in early embryonic hemoglobin Gower-1. In terms of tissue distribution, red blood cells.

In terms of biological role, the epsilon chain is a beta-type chain of early mammalian embryonic hemoglobin. The sequence is that of Hemoglobin subunit epsilon (HBE1) from Sminthopsis crassicaudata (Fat-tailed dunnart).